A 425-amino-acid chain; its full sequence is Enolase (425 aa).

Position 162 (Q162) interacts with (2R)-2-phosphoglycerate. The active-site Proton donor is the E204. The Mg(2+) site is built by D241, E288, and D315. (2R)-2-phosphoglycerate is bound by residues K340, R369, S370, and K391. K340 functions as the Proton acceptor in the catalytic mechanism.

This sequence belongs to the enolase family. Mg(2+) is required as a cofactor.

Its subcellular location is the cytoplasm. It localises to the secreted. The protein localises to the cell surface. It catalyses the reaction (2R)-2-phosphoglycerate = phosphoenolpyruvate + H2O. Its pathway is carbohydrate degradation; glycolysis; pyruvate from D-glyceraldehyde 3-phosphate: step 4/5. In terms of biological role, catalyzes the reversible conversion of 2-phosphoglycerate (2-PG) into phosphoenolpyruvate (PEP). It is essential for the degradation of carbohydrates via glycolysis. The sequence is that of Enolase from Porphyromonas gingivalis (strain ATCC 33277 / DSM 20709 / CIP 103683 / JCM 12257 / NCTC 11834 / 2561).